We begin with the raw amino-acid sequence, 126 residues long: Small ribosomal subunit protein uS12 (126 aa).

Residues 1–28 (MPTINQLVRKGRRKVRTKSKSPALDGNP) form a disordered region. Positions 9–19 (RKGRRKVRTKS) are enriched in basic residues. 3-methylthioaspartic acid is present on aspartate 89. A disordered region spans residues 106 to 126 (GVEKRRRSRSKYGVKRPKAAK). Residues 109-126 (KRRRSRSKYGVKRPKAAK) show a composition bias toward basic residues.

It belongs to the universal ribosomal protein uS12 family. In terms of assembly, part of the 30S ribosomal subunit. Contacts proteins S8 and S17. May interact with IF1 in the 30S initiation complex.

With S4 and S5 plays an important role in translational accuracy. Functionally, interacts with and stabilizes bases of the 16S rRNA that are involved in tRNA selection in the A site and with the mRNA backbone. Located at the interface of the 30S and 50S subunits, it traverses the body of the 30S subunit contacting proteins on the other side and probably holding the rRNA structure together. The combined cluster of proteins S8, S12 and S17 appears to hold together the shoulder and platform of the 30S subunit. This is Small ribosomal subunit protein uS12 from Opitutus terrae (strain DSM 11246 / JCM 15787 / PB90-1).